A 340-amino-acid polypeptide reads, in one-letter code: Dihydroorotate dehydrogenase (quinone) (340 aa).

Residues 62 to 66 (AGLDK) and threonine 86 each bind FMN. Lysine 66 is a binding site for substrate. 111-115 (NRMGF) lines the substrate pocket. Positions 139 and 172 each coordinate FMN. Asparagine 172 lines the substrate pocket. Serine 175 functions as the Nucleophile in the catalytic mechanism. Asparagine 177 provides a ligand contact to substrate. FMN-binding residues include lysine 217 and threonine 245. Substrate is bound at residue 246–247 (NT). Residues glycine 268, glycine 297, and 318–319 (YS) contribute to the FMN site.

It belongs to the dihydroorotate dehydrogenase family. Type 2 subfamily. As to quaternary structure, monomer. It depends on FMN as a cofactor.

It is found in the cell membrane. The enzyme catalyses (S)-dihydroorotate + a quinone = orotate + a quinol. The protein operates within pyrimidine metabolism; UMP biosynthesis via de novo pathway; orotate from (S)-dihydroorotate (quinone route): step 1/1. Catalyzes the conversion of dihydroorotate to orotate with quinone as electron acceptor. The chain is Dihydroorotate dehydrogenase (quinone) from Alkalilimnicola ehrlichii (strain ATCC BAA-1101 / DSM 17681 / MLHE-1).